The chain runs to 82 residues: Small ribosomal subunit protein bS16 (82 aa).

It belongs to the bacterial ribosomal protein bS16 family.

The protein is Small ribosomal subunit protein bS16 of Synechocystis sp. (strain ATCC 27184 / PCC 6803 / Kazusa).